Consider the following 367-residue polypeptide: MTSRNYLLLTPGPLTTSRTVKEAMLFDSCTWDDDYNLGVVQTIRQQLVQLATPADGYTAVLLQGSGSYAVEAVLGSVIGEQGKVLIVSNGAYGARMIEMAQLMGIACHPYDCGEVSRPDAAAIEQILQNDPAITHIAMVHSETTTGMLNPIEEVAELAKRYDKRYIVDAMSSFGGIPLDIAALNIDYLISSANKCIQGVPGFAFVIAREAELAACKGRSRSLSLDLYAQWRCMEDNHGKWRFTSPTHTVLAFAQALKELAQEGGVSARHQRYRNNQRRLVAGMRALGFRPLLDDSLHSPIITAFYSPDAPQYRFHTFYQKLKDQGFVIYPGKVSQSDCFRIGNIGEVYDADITALLAAIDNAMYWKQ.

Lysine 194 is modified (N6-(pyridoxal phosphate)lysine).

The protein belongs to the class-V pyridoxal-phosphate-dependent aminotransferase family. PhnW subfamily. As to quaternary structure, homodimer. It depends on pyridoxal 5'-phosphate as a cofactor.

The enzyme catalyses (2-aminoethyl)phosphonate + pyruvate = phosphonoacetaldehyde + L-alanine. In terms of biological role, involved in phosphonate degradation. In Klebsiella pneumoniae subsp. pneumoniae (strain ATCC 700721 / MGH 78578), this protein is 2-aminoethylphosphonate--pyruvate transaminase.